The chain runs to 364 residues: DNA polymerase IV (364 aa).

The UmuC domain occupies 14–198 (IIHIDMDAFF…LPIEKFHGVG (185 aa)). Positions 18 and 116 each coordinate Mg(2+). Residue glutamate 117 is part of the active site.

The protein belongs to the DNA polymerase type-Y family. In terms of assembly, monomer. Requires Mg(2+) as cofactor.

It is found in the cytoplasm. It carries out the reaction DNA(n) + a 2'-deoxyribonucleoside 5'-triphosphate = DNA(n+1) + diphosphate. In terms of biological role, poorly processive, error-prone DNA polymerase involved in untargeted mutagenesis. Copies undamaged DNA at stalled replication forks, which arise in vivo from mismatched or misaligned primer ends. These misaligned primers can be extended by PolIV. Exhibits no 3'-5' exonuclease (proofreading) activity. May be involved in translesional synthesis, in conjunction with the beta clamp from PolIII. The chain is DNA polymerase IV from Streptococcus pyogenes serotype M5 (strain Manfredo).